The primary structure comprises 1297 residues: Phosphoribosylformylglycinamidine synthase (1297 aa).

ATP contacts are provided by residues 307 to 318 (GASTGSGGEIRD) and Ala678. Residues Glu718, Asn722, and Asp886 each coordinate Mg(2+). Positions 1044 to 1297 (MAILREQGVN…MFQNARKYFG (254 aa)) constitute a Glutamine amidotransferase type-1 domain. Cys1137 acts as the Nucleophile in catalysis. Catalysis depends on residues His1262 and Glu1264.

The protein in the N-terminal section; belongs to the FGAMS family. As to quaternary structure, monomer.

Its subcellular location is the cytoplasm. It catalyses the reaction N(2)-formyl-N(1)-(5-phospho-beta-D-ribosyl)glycinamide + L-glutamine + ATP + H2O = 2-formamido-N(1)-(5-O-phospho-beta-D-ribosyl)acetamidine + L-glutamate + ADP + phosphate + H(+). The protein operates within purine metabolism; IMP biosynthesis via de novo pathway; 5-amino-1-(5-phospho-D-ribosyl)imidazole from N(2)-formyl-N(1)-(5-phospho-D-ribosyl)glycinamide: step 1/2. In terms of biological role, phosphoribosylformylglycinamidine synthase involved in the purines biosynthetic pathway. Catalyzes the ATP-dependent conversion of formylglycinamide ribonucleotide (FGAR) and glutamine to yield formylglycinamidine ribonucleotide (FGAM) and glutamate. The protein is Phosphoribosylformylglycinamidine synthase of Vibrio cholerae serotype O1 (strain ATCC 39315 / El Tor Inaba N16961).